We begin with the raw amino-acid sequence, 148 residues long: Putative nickel-responsive regulator (148 aa).

Ni(2+)-binding residues include histidine 88, histidine 99, histidine 101, and cysteine 107.

The protein belongs to the transcriptional regulatory CopG/NikR family. As to quaternary structure, homotetramer. The cofactor is Ni(2+).

Its function is as follows. Transcriptional regulator. This chain is Putative nickel-responsive regulator, found in Helicobacter pylori (strain ATCC 700392 / 26695) (Campylobacter pylori).